We begin with the raw amino-acid sequence, 179 residues long: MAEERSQRSRDRSREEKIDDGMIEKLVAVNRVSKTVKGGRQFTFTALTIVGNGEGSVGFGYGKAREVPVAIQKSMEYARKRMSNVSLNNGTLWHPVKANHGAASVFMKPASEGTGVIAGGAMRAVLEAVGVKNVLAKAIGSRNPINLVRATLKGLEDMQSPTHIALKRGKNVRDFSHGS.

Positions 22–85 (MIEKLVAVNR…EYARKRMSNV (64 aa)) constitute an S5 DRBM domain.

This sequence belongs to the universal ribosomal protein uS5 family. Part of the 30S ribosomal subunit. Contacts proteins S4 and S8.

Its function is as follows. With S4 and S12 plays an important role in translational accuracy. In terms of biological role, located at the back of the 30S subunit body where it stabilizes the conformation of the head with respect to the body. The polypeptide is Small ribosomal subunit protein uS5 (Xylella fastidiosa (strain M23)).